Reading from the N-terminus, the 331-residue chain is UPF0194 membrane protein Ent638_1286 (331 aa).

Residues 1 to 16 (MKKPVVVILAVVVLLA) form the signal peptide. Residues 107 to 208 (EEVAQAEAAV…LDLHDTTLIA (102 aa)) adopt a coiled-coil conformation.

It belongs to the UPF0194 family.

The protein localises to the periplasm. The protein is UPF0194 membrane protein Ent638_1286 of Enterobacter sp. (strain 638).